The sequence spans 159 residues: SsrA-binding protein (159 aa).

Positions 131–159 (KGKKLHDKRESEKERDWNRQKSRLLKDNG) are disordered. The segment covering 137 to 159 (DKRESEKERDWNRQKSRLLKDNG) has biased composition (basic and acidic residues).

It belongs to the SmpB family.

Its subcellular location is the cytoplasm. In terms of biological role, required for rescue of stalled ribosomes mediated by trans-translation. Binds to transfer-messenger RNA (tmRNA), required for stable association of tmRNA with ribosomes. tmRNA and SmpB together mimic tRNA shape, replacing the anticodon stem-loop with SmpB. tmRNA is encoded by the ssrA gene; the 2 termini fold to resemble tRNA(Ala) and it encodes a 'tag peptide', a short internal open reading frame. During trans-translation Ala-aminoacylated tmRNA acts like a tRNA, entering the A-site of stalled ribosomes, displacing the stalled mRNA. The ribosome then switches to translate the ORF on the tmRNA; the nascent peptide is terminated with the 'tag peptide' encoded by the tmRNA and targeted for degradation. The ribosome is freed to recommence translation, which seems to be the essential function of trans-translation. In Rhizobium leguminosarum bv. trifolii (strain WSM2304), this protein is SsrA-binding protein.